The following is a 172-amino-acid chain: Adenine phosphoribosyltransferase (172 aa).

This sequence belongs to the purine/pyrimidine phosphoribosyltransferase family. In terms of assembly, homodimer.

Its subcellular location is the cytoplasm. It carries out the reaction AMP + diphosphate = 5-phospho-alpha-D-ribose 1-diphosphate + adenine. It participates in purine metabolism; AMP biosynthesis via salvage pathway; AMP from adenine: step 1/1. In terms of biological role, catalyzes a salvage reaction resulting in the formation of AMP, that is energically less costly than de novo synthesis. In Streptococcus mutans serotype c (strain ATCC 700610 / UA159), this protein is Adenine phosphoribosyltransferase.